We begin with the raw amino-acid sequence, 92 residues long: UPF0297 protein TTE1249 (92 aa).

The protein belongs to the UPF0297 family.

The chain is UPF0297 protein TTE1249 from Caldanaerobacter subterraneus subsp. tengcongensis (strain DSM 15242 / JCM 11007 / NBRC 100824 / MB4) (Thermoanaerobacter tengcongensis).